Here is a 94-residue protein sequence, read N- to C-terminus: Integration host factor subunit beta (94 aa).

It belongs to the bacterial histone-like protein family. In terms of assembly, heterodimer of an alpha and a beta chain.

This protein is one of the two subunits of integration host factor, a specific DNA-binding protein that functions in genetic recombination as well as in transcriptional and translational control. The chain is Integration host factor subunit beta from Edwardsiella ictaluri (strain 93-146).